Reading from the N-terminus, the 76-residue chain is Large ribosomal subunit protein eL20 (76 aa).

Belongs to the eukaryotic ribosomal protein eL20 family. Part of the 50S ribosomal subunit. Binds 23S rRNA.

This is Large ribosomal subunit protein eL20 from Methanocaldococcus jannaschii (strain ATCC 43067 / DSM 2661 / JAL-1 / JCM 10045 / NBRC 100440) (Methanococcus jannaschii).